A 220-amino-acid chain; its full sequence is Protein myomaker (220 aa).

A topological domain (extracellular) is located at residue Met-1. Residues Gly-2–Ala-22 form a helical membrane-spanning segment. Residues Ser-23 to Tyr-37 are Cytoplasmic-facing. A helical transmembrane segment spans residues Phe-38 to Leu-58. Over Cys-59–Asp-64 the chain is Extracellular. The helical transmembrane segment at Ile-65–Leu-85 threads the bilayer. Over Gly-86 to Arg-93 the chain is Cytoplasmic. Residues Ser-94–Gln-110 form a helical membrane-spanning segment. The Extracellular portion of the chain corresponds to Asp-111–Arg-112. A helical membrane pass occupies residues Leu-113 to Trp-133. At Leu-134 to Gln-153 the chain is on the cytoplasmic side. Residues Val-154–Trp-174 traverse the membrane as a helical segment. A topological domain (extracellular) is located at residue Asp-175. A helical membrane pass occupies residues Tyr-176–Pro-196. Residues Lys-197–Val-220 are Cytoplasmic-facing.

Belongs to the TMEM8 family.

Its subcellular location is the cell membrane. In terms of biological role, myoblast-specific protein that mediates myoblast fusion, an essential step for the formation of multi-nucleated muscle fibers. Actively participates in the membrane fusion reaction by mediating the mixing of cell membrane lipids (hemifusion) upstream of mymx. The protein is Protein myomaker of Danio rerio (Zebrafish).